The chain runs to 135 residues: Small ribosomal subunit protein uS12 (135 aa).

The tract at residues 1-23 is disordered; that stretch reads MPTINQLVRKGRHSKTTKSDSPA. Asp102 is subject to 3-methylthioaspartic acid.

It belongs to the universal ribosomal protein uS12 family. As to quaternary structure, part of the 30S ribosomal subunit. Contacts proteins S8 and S17. May interact with IF1 in the 30S initiation complex.

Functionally, with S4 and S5 plays an important role in translational accuracy. In terms of biological role, interacts with and stabilizes bases of the 16S rRNA that are involved in tRNA selection in the A site and with the mRNA backbone. Located at the interface of the 30S and 50S subunits, it traverses the body of the 30S subunit contacting proteins on the other side and probably holding the rRNA structure together. The combined cluster of proteins S8, S12 and S17 appears to hold together the shoulder and platform of the 30S subunit. In Lactobacillus gasseri (strain ATCC 33323 / DSM 20243 / BCRC 14619 / CIP 102991 / JCM 1131 / KCTC 3163 / NCIMB 11718 / NCTC 13722 / AM63), this protein is Small ribosomal subunit protein uS12.